We begin with the raw amino-acid sequence, 91 residues long: Small ribosomal subunit protein uS19 (91 aa).

Belongs to the universal ribosomal protein uS19 family.

Protein S19 forms a complex with S13 that binds strongly to the 16S ribosomal RNA. The polypeptide is Small ribosomal subunit protein uS19 (Verminephrobacter eiseniae (strain EF01-2)).